Reading from the N-terminus, the 509-residue chain is tRNA-2-methylthio-N(6)-dimethylallyladenosine synthase (509 aa).

Residues 1–15 (MNEQQRLASQQANAS) are compositionally biased toward polar residues. Residues 1–22 (MNEQQRLASQQANASTKKEEKD) are disordered. The region spanning 66-184 (RKFYIRTYGC…LPYILKDAMF (119 aa)) is the MTTase N-terminal domain. [4Fe-4S] cluster contacts are provided by C75, C111, C145, C221, C225, and C228. Residues 207-437 (RRGDIKAWVN…NELVNEFSAK (231 aa)) form the Radical SAM core domain. The region spanning 440 to 503 (KKYEGQIVEV…TWSLNGELVE (64 aa)) is the TRAM domain.

Belongs to the methylthiotransferase family. MiaB subfamily. In terms of assembly, monomer. It depends on [4Fe-4S] cluster as a cofactor.

The protein localises to the cytoplasm. It catalyses the reaction N(6)-dimethylallyladenosine(37) in tRNA + (sulfur carrier)-SH + AH2 + 2 S-adenosyl-L-methionine = 2-methylsulfanyl-N(6)-dimethylallyladenosine(37) in tRNA + (sulfur carrier)-H + 5'-deoxyadenosine + L-methionine + A + S-adenosyl-L-homocysteine + 2 H(+). Its function is as follows. Catalyzes the methylthiolation of N6-(dimethylallyl)adenosine (i(6)A), leading to the formation of 2-methylthio-N6-(dimethylallyl)adenosine (ms(2)i(6)A) at position 37 in tRNAs that read codons beginning with uridine. The protein is tRNA-2-methylthio-N(6)-dimethylallyladenosine synthase of Bacillus cytotoxicus (strain DSM 22905 / CIP 110041 / 391-98 / NVH 391-98).